A 21-amino-acid polypeptide reads, in one-letter code: Thioredoxin (21 aa).

Lysine 3 carries the N6-acetyllysine modification. Lysine 8 bears the N6-succinyllysine mark.

This sequence belongs to the thioredoxin family. As to quaternary structure, homodimer; disulfide-linked. Interacts with TXNIP through the redox-active site. Interacts with MAP3K5 and CASP3. Interacts with APEX1; the interaction stimulates the FOS/JUN AP-1 DNA-binding activity in a redox-dependent manner.

The protein localises to the nucleus. Its subcellular location is the cytoplasm. It is found in the secreted. In terms of biological role, participates in various redox reactions through the reversible oxidation of its active center dithiol to a disulfide and catalyzes dithiol-disulfide exchange reactions. Plays a role in the reversible S-nitrosylation of cysteine residues in target proteins, and thereby contributes to the response to intracellular nitric oxide. Nitrosylates the active site Cys of CASP3 in response to nitric oxide (NO), and thereby inhibits caspase-3 activity. Induces the FOS/JUN AP-1 DNA binding activity in ionizing radiation (IR) cells through its oxidation/reduction status and stimulates AP-1 transcriptional activity. This is Thioredoxin (TXN) from Canis lupus familiaris (Dog).